The sequence spans 824 residues: MKEYRPQEIEKKWQEVWEEKKVFYTPQRSEKPKYYALVMFPYPSGTLHVGHVKNYVIGDIVARYKRMRGYNVLHPFGYDAFGLPAENAAIEKGIHPEEWTRKNIATIRQQVKKLGISYDWSREIATCDEEYYKWTQWIFLQLYKNGLAYKKKAAVNWCPKCKTVLANEQVKDGKCERCGTSVTIRHLEQWFFKITDYAERLLNDLDKLTGWPEHVKTMQRNWIGKSTGAEIDFPVEGSDTKIRVFTTRPDTLWGVTFMALAPESPLVEELVPEEKKEELQEFLERVKQQDRFRRTSVEAEKEGFFLGRYAINPVTGERIPIYVANYILMEYGTGAIMGVPAHDQRDFSFAKKYGIPIKVVIKPADKDLDPEKMEEAYEGEGIMVNSGPFDGTPSSEGIEKVINWLEEKGIGKRSVQYKLRDWLISRQRYWGAPIPIIYCEKCGVVPVPEEDLPVRLPKDVEFLPTGQSPLSFHEGFKKTKCPVCGGEAQRETDTMDTFVDSSWYFLRYVNPHLEDKPFEPDDVNYWLPVDQYIGGVEHAVLHLLYSRFVTKVLHDLGYLNFDEPFTNLFTQGMIYKDGAKMSKSKGNVVSPDEMIEKYGADTLRMYILFMAPPEKDAEWSDAGIEGVHRFVKRLWNTFYTVLPFVKEENTENLVLKNSTEKELRRKLHSIIKKITEDIEGGFKFNTAISGLMELVNHLSQYLNSVPQEEWNRKLLREIVEKLTLALSPFAPHLAEEFWHDLGNDSLVVQQSWPSYDPKALEVEEVEIAIQINGKVRDKVVVPVDISEEDLKRIVLERERVKEYVDGKPIRKFIYVKGRIVNIVV.

The short motif at 41–51 (PYPSGTLHVGH) is the 'HIGH' region element. The 'KMSKS' region motif lies at 580 to 584 (KMSKS). Lys-583 contacts ATP.

It belongs to the class-I aminoacyl-tRNA synthetase family.

It localises to the cytoplasm. It carries out the reaction tRNA(Leu) + L-leucine + ATP = L-leucyl-tRNA(Leu) + AMP + diphosphate. This chain is Leucine--tRNA ligase, found in Thermotoga maritima (strain ATCC 43589 / DSM 3109 / JCM 10099 / NBRC 100826 / MSB8).